We begin with the raw amino-acid sequence, 430 residues long: Adenylosuccinate synthetase (430 aa).

Residues 12-18 and 40-42 each bind GTP; these read GDEGKGK and GHT. Aspartate 13 serves as the catalytic Proton acceptor. The Mg(2+) site is built by aspartate 13 and glycine 40. Residues 13 to 16, 38 to 41, threonine 130, arginine 144, glutamine 224, and threonine 239 each bind IMP; these read DEGK and NAGH. Histidine 41 (proton donor) is an active-site residue. The interval 277-298 is disordered; that stretch reads PFPTEQDNETGRKIGERGREFG. Positions 285-296 are enriched in basic and acidic residues; that stretch reads ETGRKIGERGRE. 299–305 provides a ligand contact to substrate; that stretch reads TNTGRPR. Arginine 303 serves as a coordination point for IMP. Residues arginine 305, 331–333, and 413–415 each bind GTP; these read KLD and STS.

This sequence belongs to the adenylosuccinate synthetase family. As to quaternary structure, homodimer. The cofactor is Mg(2+).

The protein resides in the cytoplasm. It carries out the reaction IMP + L-aspartate + GTP = N(6)-(1,2-dicarboxyethyl)-AMP + GDP + phosphate + 2 H(+). It functions in the pathway purine metabolism; AMP biosynthesis via de novo pathway; AMP from IMP: step 1/2. Functionally, plays an important role in the de novo pathway of purine nucleotide biosynthesis. Catalyzes the first committed step in the biosynthesis of AMP from IMP. This chain is Adenylosuccinate synthetase, found in Bradyrhizobium sp. (strain BTAi1 / ATCC BAA-1182).